The following is a 323-amino-acid chain: 8-oxo-dGDP phosphatase NUDT18 (323 aa).

The 131-residue stretch at 37 to 167 (RLRKNVCYVV…DILHLVELAA (131 aa)) folds into the Nudix hydrolase domain. Leucine 58 contacts Mg(2+). A Nudix box motif is present at residues 76–97 (GRMEPGETIVEALQREVKEEAG).

The protein belongs to the Nudix hydrolase family. Requires Mn(2+) as cofactor. It depends on Mg(2+) as a cofactor.

The catalysed reaction is 8-oxo-dGDP + H2O = 8-oxo-dGMP + phosphate + H(+). It catalyses the reaction 8-oxo-dADP + H2O = 8-oxo-dAMP + phosphate + H(+). It carries out the reaction 2-oxo-dADP + H2O = 2-oxo-dAMP + phosphate + H(+). The enzyme catalyses 8-oxo-GDP + H2O = 8-oxo-GMP + phosphate + H(+). Functionally, mediates the hydrolysis of oxidized nucleoside diphosphate derivatives. Hydrolyzes 8-oxo-7,8-dihydroguanine (8-oxo-Gua)-containing deoxyribo- and ribonucleoside diphosphates to the monophosphates. Hydrolyzes 8-oxo-dGDP and 8-oxo-GDP with the same efficiencies. Also hydrolyzes 8-OH-dADP and 2-OH-dADP. Exhibited no or minimal hydrolysis activity against 8-oxo-dGTP, 8-oxo-GTP, dGTP, GTP, dGDP and GDP. Probably removes oxidized guanine nucleotides from both the DNA and RNA precursor pools. This is 8-oxo-dGDP phosphatase NUDT18 from Homo sapiens (Human).